We begin with the raw amino-acid sequence, 127 residues long: DNA-directed RNA polymerase subunit omega (127 aa).

Belongs to the RNA polymerase subunit omega family. As to quaternary structure, the RNAP catalytic core consists of 2 alpha, 1 beta, 1 beta' and 1 omega subunit. When a sigma factor is associated with the core the holoenzyme is formed, which can initiate transcription.

It catalyses the reaction RNA(n) + a ribonucleoside 5'-triphosphate = RNA(n+1) + diphosphate. In terms of biological role, promotes RNA polymerase assembly. Latches the N- and C-terminal regions of the beta' subunit thereby facilitating its interaction with the beta and alpha subunits. The polypeptide is DNA-directed RNA polymerase subunit omega (Rickettsia rickettsii (strain Iowa)).